A 238-amino-acid polypeptide reads, in one-letter code: Ribonuclease PH (238 aa).

Phosphate-binding positions include Arg-86 and 124-126 (GTR).

It belongs to the RNase PH family. In terms of assembly, homohexameric ring arranged as a trimer of dimers.

It carries out the reaction tRNA(n+1) + phosphate = tRNA(n) + a ribonucleoside 5'-diphosphate. In terms of biological role, phosphorolytic 3'-5' exoribonuclease that plays an important role in tRNA 3'-end maturation. Removes nucleotide residues following the 3'-CCA terminus of tRNAs; can also add nucleotides to the ends of RNA molecules by using nucleoside diphosphates as substrates, but this may not be physiologically important. Probably plays a role in initiation of 16S rRNA degradation (leading to ribosome degradation) during starvation. The sequence is that of Ribonuclease PH from Psychrobacter sp. (strain PRwf-1).